Here is a 501-residue protein sequence, read N- to C-terminus: Ammonium transporter 1 member 1 (501 aa).

The next 10 helical transmembrane spans lie at 8–28 (LAVL…GQLG), 46–66 (LLFS…LCAG), 81–101 (VLDA…FAFG), 128–148 (FLYQ…SIAE), 152–172 (FVAY…VVSH), 199–219 (FAGS…GALI), 243–263 (LVVL…PGSF), 333–353 (VVEP…LLGC), 366–386 (LEAA…TALF), and 419–439 (LIQI…LFFI). Residue threonine 460 is modified to Phosphothreonine. 4 positions are modified to phosphoserine: serine 475, serine 488, serine 490, and serine 492.

Belongs to the ammonia transporter channel (TC 1.A.11.2) family. In terms of assembly, self interacts. Interacts with the receptor protein kinases CEPR2, At2g28990 and PAM74. In terms of tissue distribution, highly expressed in roots. Expressed in root tips, root hairs, root epidermis, rhizodermis, cortex and pericycle. Expressed in leaves epidermal and mesophyll cells.

Its subcellular location is the cell membrane. In terms of biological role, high affinity ammonium transporter probably involved in ammonium uptake from the soil, long-distance transport to the shoots and re-uptake of apoplastic ammonium that derives from photorespiration in shoots. Contributes with AMT1-3 to the overall ammonium uptake capacity in roots under nitrogen-deficiency conditions. The polypeptide is Ammonium transporter 1 member 1 (AMT1-1) (Arabidopsis thaliana (Mouse-ear cress)).